The chain runs to 337 residues: Putative NAC domain-containing protein 94 (337 aa).

Residues 20–191 (VLPGFRFHPT…AWAICRIFKK (172 aa)) form the NAC domain.

The protein localises to the nucleus. The polypeptide is Putative NAC domain-containing protein 94 (ANAC094) (Arabidopsis thaliana (Mouse-ear cress)).